Consider the following 571-residue polypeptide: Proline--tRNA ligase (571 aa).

The protein belongs to the class-II aminoacyl-tRNA synthetase family. ProS type 1 subfamily. Homodimer.

It is found in the cytoplasm. The enzyme catalyses tRNA(Pro) + L-proline + ATP = L-prolyl-tRNA(Pro) + AMP + diphosphate. In terms of biological role, catalyzes the attachment of proline to tRNA(Pro) in a two-step reaction: proline is first activated by ATP to form Pro-AMP and then transferred to the acceptor end of tRNA(Pro). As ProRS can inadvertently accommodate and process non-cognate amino acids such as alanine and cysteine, to avoid such errors it has two additional distinct editing activities against alanine. One activity is designated as 'pretransfer' editing and involves the tRNA(Pro)-independent hydrolysis of activated Ala-AMP. The other activity is designated 'posttransfer' editing and involves deacylation of mischarged Ala-tRNA(Pro). The misacylated Cys-tRNA(Pro) is not edited by ProRS. The polypeptide is Proline--tRNA ligase (Pseudoalteromonas atlantica (strain T6c / ATCC BAA-1087)).